The primary structure comprises 332 residues: 2-hydroxyacid dehydrogenase homolog 2 (332 aa).

NAD(+) contacts are provided by residues K154–I155, T233–R235, and D259. The active site involves R235. The active site involves E264. H296 (proton donor) is an active-site residue. H296–F299 provides a ligand contact to NAD(+).

It belongs to the D-isomer specific 2-hydroxyacid dehydrogenase family.

The protein resides in the cytoplasm. The protein localises to the nucleus. This Schizosaccharomyces pombe (strain 972 / ATCC 24843) (Fission yeast) protein is 2-hydroxyacid dehydrogenase homolog 2.